Consider the following 95-residue polypeptide: Small ribosomal subunit protein bS21 (95 aa).

The tract at residues 55-95 (RKLARKKMQREGLLPMKPKPVFGAGPGAGRGGPGAGARPPR) is disordered. Residues 78–89 (AGPGAGRGGPGA) show a composition bias toward gly residues.

It belongs to the bacterial ribosomal protein bS21 family.

In Nitrobacter hamburgensis (strain DSM 10229 / NCIMB 13809 / X14), this protein is Small ribosomal subunit protein bS21.